We begin with the raw amino-acid sequence, 1131 residues long: Probable pre-mRNA-splicing factor ATP-dependent RNA helicase mog-1 (1131 aa).

6 stretches are compositionally biased toward basic and acidic residues: residues 1 to 12, 65 to 122, 139 to 148, 160 to 173, 180 to 225, and 407 to 416; these read MSDKRADGRLEG, RGVT…DRSG, WDQDDREGSS, RGER…DSER, RSER…WEEE, and GNYKESHQFA. Disordered regions lie at residues 1 to 225 and 389 to 416; these read MSDK…WEEE and MGVK…HQFA. Residues 451–614 enclose the Helicase ATP-binding domain; that stretch reads MNVIRENNVV…FGGNCPTFTI (164 aa). 464-471 serves as a coordination point for ATP; the sequence is GETGSGKT. Positions 561-564 match the DEAH box motif; the sequence is DEAH. The region spanning 629–812 is the Helicase C-terminal domain; sequence PVEDYVDAAV…NVVLLLKSLG (184 aa). 2 stretches are compositionally biased toward basic and acidic residues: residues 1085 to 1114 and 1121 to 1131; these read EMRE…RRVV and ARSERRKLWGL. A disordered region spans residues 1085-1131; sequence EMREAQKEMERRKEESDKAFKRPESSRRVVEVGSKSARSERRKLWGL.

It belongs to the DEAD box helicase family. DEAH subfamily. PRP16 sub-subfamily.

Its subcellular location is the nucleus. The enzyme catalyses ATP + H2O = ADP + phosphate + H(+). Probable ATP-binding RNA helicase involved in pre-mRNA splicing. This Caenorhabditis elegans protein is Probable pre-mRNA-splicing factor ATP-dependent RNA helicase mog-1 (mog-1).